Here is a 236-residue protein sequence, read N- to C-terminus: Chorionic somatomammotropin hormone 1 (236 aa).

A signal peptide spans 1-36 (MAPASSHRGHQWICDLVRGSCLLLLLVVSNLLLCQG). Asn89 is a glycosylation site (N-linked (GlcNAc...) asparagine). Disulfide bonds link Cys98/Cys214 and Cys231/Cys236.

Belongs to the somatotropin/prolactin family.

The protein resides in the secreted. This chain is Chorionic somatomammotropin hormone 1 (CSH1), found in Bos taurus (Bovine).